Here is a 155-residue protein sequence, read N- to C-terminus: Small ribosomal subunit protein uS7 (155 aa).

Belongs to the universal ribosomal protein uS7 family. Part of the 30S ribosomal subunit. Contacts proteins S9 and S11.

In terms of biological role, one of the primary rRNA binding proteins, it binds directly to 16S rRNA where it nucleates assembly of the head domain of the 30S subunit. Is located at the subunit interface close to the decoding center, probably blocks exit of the E-site tRNA. The polypeptide is Small ribosomal subunit protein uS7 (Pseudothermotoga lettingae (strain ATCC BAA-301 / DSM 14385 / NBRC 107922 / TMO) (Thermotoga lettingae)).